A 182-amino-acid polypeptide reads, in one-letter code: Bifunctional protein PyrR (182 aa).

A PRPP-binding motif is present at residues 100–112; sequence VVLVDDVLYTGRT.

The protein belongs to the purine/pyrimidine phosphoribosyltransferase family. PyrR subfamily. As to quaternary structure, homodimer and homohexamer; in equilibrium.

It carries out the reaction UMP + diphosphate = 5-phospho-alpha-D-ribose 1-diphosphate + uracil. Functionally, regulates transcriptional attenuation of the pyrimidine nucleotide (pyr) operon by binding in a uridine-dependent manner to specific sites on pyr mRNA. This disrupts an antiterminator hairpin in the RNA and favors formation of a downstream transcription terminator, leading to a reduced expression of downstream genes. Its function is as follows. Also displays a weak uracil phosphoribosyltransferase activity which is not physiologically significant. The protein is Bifunctional protein PyrR of Natranaerobius thermophilus (strain ATCC BAA-1301 / DSM 18059 / JW/NM-WN-LF).